The sequence spans 493 residues: MNHILAIDQGTTSSRAMVFDEALTLKSVAQEEFPQIYPRPGWVEHDPSDLWSSVAATARAAVERAEIDGSLAAIGITNQRETVVVWERASGHPIHNAIVWQDRRTADLCHALAEAGHEPLITGRTGLLLDPYFSATKLKWLLDHVEGARARARRGELLFGTVDSYLIWKLTGGRAHVTDATNAARTMLFDIGRGIWDPEICGLLDIPMEMLPEVKDCAAPFGMTRADLFGREIPILGVAGDQQAATCGQACFRPGMMKSTYGTGCFALLNTGEERVTSRARLLTTIAYQLGGKRTYALEGSIFIAGAVVQWLRDGLKIIREAGETQGLALSSDAAQDLVIVPAFTGLGAPWWKPESRGAVFGLTRNSGPAEFARAALESVGYQTRDLLEAMRADWAAGAEGVLRVDGGMAASDWSMQFLADIIGAPVDRPVVRETTALGVAWLAGMQAGLCPGPEEFAADWALERRFEPQMEASVREAKYDRWGRAVRAVMAV.

Thr11 serves as a coordination point for ADP. Thr11, Thr12, and Ser13 together coordinate ATP. Thr11 lines the sn-glycerol 3-phosphate pocket. Arg15 provides a ligand contact to ADP. Sn-glycerol 3-phosphate-binding residues include Arg80, Glu81, Tyr132, and Asp241. Positions 80, 81, 132, 241, and 242 each coordinate glycerol. 2 residues coordinate ADP: Thr263 and Gly306. The ATP site is built by Thr263, Gly306, Gln310, and Gly408. Gly408 is a binding site for ADP.

Belongs to the FGGY kinase family.

It carries out the reaction glycerol + ATP = sn-glycerol 3-phosphate + ADP + H(+). The protein operates within polyol metabolism; glycerol degradation via glycerol kinase pathway; sn-glycerol 3-phosphate from glycerol: step 1/1. With respect to regulation, inhibited by fructose 1,6-bisphosphate (FBP). Its function is as follows. Key enzyme in the regulation of glycerol uptake and metabolism. Catalyzes the phosphorylation of glycerol to yield sn-glycerol 3-phosphate. The sequence is that of Glycerol kinase from Cereibacter sphaeroides (strain ATCC 17029 / ATH 2.4.9) (Rhodobacter sphaeroides).